Consider the following 714-residue polypeptide: Fatty acid oxidation complex subunit alpha (714 aa).

Positions 1–190 are enoyl-CoA hydratase; that stretch reads MDMTSAFTLN…KSGLVDEIVP (190 aa). The 3-hydroxyacyl-CoA dehydrogenase stretch occupies residues 306 to 714; the sequence is GTLDSIGILG…FWKTSATDRH (409 aa).

In the N-terminal section; belongs to the enoyl-CoA hydratase/isomerase family. The protein in the central section; belongs to the 3-hydroxyacyl-CoA dehydrogenase family. In terms of assembly, heterotetramer of two alpha chains (FadJ) and two beta chains (FadI).

The protein resides in the cytoplasm. The enzyme catalyses a (3S)-3-hydroxyacyl-CoA = a (2E)-enoyl-CoA + H2O. It catalyses the reaction a 4-saturated-(3S)-3-hydroxyacyl-CoA = a (3E)-enoyl-CoA + H2O. The catalysed reaction is a (3S)-3-hydroxyacyl-CoA + NAD(+) = a 3-oxoacyl-CoA + NADH + H(+). It carries out the reaction (3S)-3-hydroxybutanoyl-CoA = (3R)-3-hydroxybutanoyl-CoA. It functions in the pathway lipid metabolism; fatty acid beta-oxidation. Catalyzes the formation of a hydroxyacyl-CoA by addition of water on enoyl-CoA. Also exhibits 3-hydroxyacyl-CoA epimerase and 3-hydroxyacyl-CoA dehydrogenase activities. The sequence is that of Fatty acid oxidation complex subunit alpha from Escherichia fergusonii (strain ATCC 35469 / DSM 13698 / CCUG 18766 / IAM 14443 / JCM 21226 / LMG 7866 / NBRC 102419 / NCTC 12128 / CDC 0568-73).